Consider the following 460-residue polypeptide: NADH-ubiquinone oxidoreductase chain 4 (460 aa).

13 helical membrane passes run 20–42 (AKWL…LSWL), 61–81 (PLST…VLAS), 94–113 (RTYI…AFGA), 117–139 (IMFY…RWGN), 148–168 (TYFL…LLLL), 195–215 (LWWA…GVHL), 225–245 (PIAG…YGMM), 258–278 (LAYP…SICL), 285–304 (SLIA…GILI), 308–330 (WGFT…LFCL), 351–371 (MILP…LALP), 394–414 (LLLT…LFLM), and 436–456 (LLIT…ELMW).

The protein belongs to the complex I subunit 4 family.

It is found in the mitochondrion membrane. It carries out the reaction a ubiquinone + NADH + 5 H(+)(in) = a ubiquinol + NAD(+) + 4 H(+)(out). Functionally, core subunit of the mitochondrial membrane respiratory chain NADH dehydrogenase (Complex I) that is believed to belong to the minimal assembly required for catalysis. Complex I functions in the transfer of electrons from NADH to the respiratory chain. The immediate electron acceptor for the enzyme is believed to be ubiquinone. This Salmo salar (Atlantic salmon) protein is NADH-ubiquinone oxidoreductase chain 4 (MT-ND4).